The chain runs to 318 residues: Rhomboid-related protein 4 (318 aa).

Over 1-21 (MQRRSRGINTGLILLLSQIFH) the chain is Cytoplasmic. A helical membrane pass occupies residues 22-42 (VGINNIPPVTLATLALNIWFF). The Extracellular portion of the chain corresponds to 43–106 (LNPQKPLYSS…RRLGSRWFAY (64 aa)). Residues 107 to 127 (VITTFSVLTGVVYLLLQFAVA) traverse the membrane as a helical segment. Topologically, residues 128–137 (EFMDEPDFKR) are cytoplasmic. A helical membrane pass occupies residues 138-154 (SCAVGFSGVLFALKVLN). The active-site Nucleophile is the serine 144. Topologically, residues 155 to 179 (NHYCPGGFVNILGFPVPNRFACWVE) are extracellular. Residues 180–204 (LVAIHLFSPGTSFAGHQAGILVGLM) form a helical membrane-spanning segment. Histidine 195 is an active-site residue. Residues 205-318 (YTQGPLKKIM…RQRLHRFDSQ (114 aa)) are Cytoplasmic-facing. Positions 271-286 (SEEEQLERALQASLWD) are ubiquitin-binding domain (UBD). The tract at residues 285–318 (WDRGHTRNSPPPYGFHLSPEEEMRRQRLHRFDSQ) is disordered. A compositionally biased stretch (basic and acidic residues) spans 302–318 (SPEEEMRRQRLHRFDSQ). Residues 303-318 (PEEEMRRQRLHRFDSQ) form a VCP/p97-interacting motif (VIM) region.

The protein belongs to the peptidase S54 family. As to quaternary structure, interacts with BIK and STEAP3. Interacts (via C-terminal domain) with VCP. Interacts with ubiquitin and ubiquitinated proteins.

Its subcellular location is the endoplasmic reticulum membrane. The protein resides in the mitochondrion membrane. The catalysed reaction is Cleaves type-1 transmembrane domains using a catalytic dyad composed of serine and histidine that are contributed by different transmembrane domains.. Inhibited by aprotinin. Its function is as follows. Intramembrane-cleaving serine protease that cleaves single transmembrane or multi-pass membrane proteins in the hydrophobic plane of the membrane, luminal loops and juxtamembrane regions. Involved in regulated intramembrane proteolysis and the subsequent release of functional polypeptides from their membrane anchors. Functional component of endoplasmic reticulum-associated degradation (ERAD) for misfolded membrane proteins. Required for the degradation process of some specific misfolded endoplasmic reticulum (ER) luminal proteins. Participates in the transfer of misfolded proteins from the ER to the cytosol, where they are destroyed by the proteasome in a ubiquitin-dependent manner. Functions in BIK, MPZ, PKD1, PTCRA, RHO, STEAP3 and TRAC processing. Involved in the regulation of exosomal secretion; inhibits the TSAP6-mediated secretion pathway. Involved in the regulation of apoptosis; modulates BIK-mediated apoptotic activity. Also plays a role in the regulation of spermatogenesis; inhibits apoptotic activity in spermatogonia. The protein is Rhomboid-related protein 4 (RHBDD1) of Pongo abelii (Sumatran orangutan).